Reading from the N-terminus, the 577-residue chain is Proline--tRNA ligase (577 aa).

It belongs to the class-II aminoacyl-tRNA synthetase family. ProS type 1 subfamily. Homodimer.

The protein resides in the cytoplasm. It carries out the reaction tRNA(Pro) + L-proline + ATP = L-prolyl-tRNA(Pro) + AMP + diphosphate. Functionally, catalyzes the attachment of proline to tRNA(Pro) in a two-step reaction: proline is first activated by ATP to form Pro-AMP and then transferred to the acceptor end of tRNA(Pro). As ProRS can inadvertently accommodate and process non-cognate amino acids such as alanine and cysteine, to avoid such errors it has two additional distinct editing activities against alanine. One activity is designated as 'pretransfer' editing and involves the tRNA(Pro)-independent hydrolysis of activated Ala-AMP. The other activity is designated 'posttransfer' editing and involves deacylation of mischarged Ala-tRNA(Pro). The misacylated Cys-tRNA(Pro) is not edited by ProRS. This is Proline--tRNA ligase from Chlamydia felis (strain Fe/C-56) (Chlamydophila felis).